Reading from the N-terminus, the 109-residue chain is Tyrosine-protein phosphatase 16 (109 aa).

The Tyrosine-protein phosphatase domain occupies 1-109 (WRMVTEHTST…RIKTQKPIVV (109 aa)). Substrate is bound at residue Asp81.

It belongs to the protein-tyrosine phosphatase family.

It catalyses the reaction O-phospho-L-tyrosyl-[protein] + H2O = L-tyrosyl-[protein] + phosphate. The chain is Tyrosine-protein phosphatase 16 (STY-16) from Styela plicata (Wrinkled sea squirt).